Reading from the N-terminus, the 492-residue chain is Catalase-1 (492 aa).

Catalysis depends on residues H65 and N138. Y348 lines the heme pocket.

Belongs to the catalase family. As to quaternary structure, homotetramer. It depends on heme as a cofactor.

Its subcellular location is the peroxisome. The protein resides in the glyoxysome. It catalyses the reaction 2 H2O2 = O2 + 2 H2O. Its function is as follows. Occurs in almost all aerobically respiring organisms and serves to protect cells from the toxic effects of hydrogen peroxide. This chain is Catalase-1 (CAT1), found in Triticum aestivum (Wheat).